The chain runs to 314 residues: Methionyl-tRNA formyltransferase (314 aa).

Position 110-113 (110-113) interacts with (6S)-5,6,7,8-tetrahydrofolate; that stretch reads SLLP.

This sequence belongs to the Fmt family.

It carries out the reaction L-methionyl-tRNA(fMet) + (6R)-10-formyltetrahydrofolate = N-formyl-L-methionyl-tRNA(fMet) + (6S)-5,6,7,8-tetrahydrofolate + H(+). Functionally, attaches a formyl group to the free amino group of methionyl-tRNA(fMet). The formyl group appears to play a dual role in the initiator identity of N-formylmethionyl-tRNA by promoting its recognition by IF2 and preventing the misappropriation of this tRNA by the elongation apparatus. The protein is Methionyl-tRNA formyltransferase of Bacillus cereus (strain G9842).